A 311-amino-acid polypeptide reads, in one-letter code: Tricarboxylate transport protein, mitochondrial (311 aa).

A propeptide spans 1–13 (removed in mature form); sequence MAAPRGPRALSAA. The tract at residues 1–21 is disordered; it reads MAAPRGPRALSAAAPGSGKPK. Solcar repeat units lie at residues 23-111, 122-208, and 218-303; these read THPG…LSNH, RRGL…LRNW, and MNPL…VVKL. A run of 3 helical transmembrane segments spans residues 29–46, 86–105, and 129–143; these read ILAGGLAGGIEICITFPT, GLSSLLYGSIPKAAVRFGMF, and LGAGVAEAVVVVCPM. Phosphoserine is present on S156. 3 helical membrane passes run 183-202, 224-241, and 278-297; these read GLTATVLKQGSNQAIRFFVM, GVFGATAGAASVFGNTPL, and GTVPRLGRVCLDVAIVFIIY.

It belongs to the mitochondrial carrier (TC 2.A.29) family. Possesses a short cleavable presequence, which, however, is found to be dispensable both for targeting to mitochondria and insertion into the inner membrane. However, the presequence is required to keep SLC25A1 in a soluble state and thus in an import-competent state. Mature SLC25A1 lacking the presequence is prone to aggregation. Expressed minimally but ubiquitously throughout the adult brain. Detected at higher levels in the olfactory bulb, neocortex and cerebellum. Also expressed in a subset of large cells in the globus pallidus.

It is found in the mitochondrion inner membrane. Its subcellular location is the mitochondrion membrane. It catalyses the reaction (S)-malate(in) + citrate(out) = (S)-malate(out) + citrate(in). It carries out the reaction D-threo-isocitrate(in) + citrate(out) = D-threo-isocitrate(out) + citrate(in). The catalysed reaction is citrate(out) + succinate(in) = citrate(in) + succinate(out). The enzyme catalyses cis-aconitate(in) + citrate(out) = cis-aconitate(out) + citrate(in). It catalyses the reaction trans-aconitate(in) + citrate(out) = trans-aconitate(out) + citrate(in). It carries out the reaction phosphoenolpyruvate(in) + citrate(out) = phosphoenolpyruvate(out) + citrate(in). The catalysed reaction is maleate(in) + citrate(out) = maleate(out) + citrate(in). Its function is as follows. Mitochondrial electroneutral antiporter that exports citrate from the mitochondria into the cytosol in exchange for malate. Also able to mediate the exchange of citrate for isocitrate, phosphoenolpyruvate, cis-aconitate and to a lesser extent trans-aconitate, maleate and succinate. In the cytoplasm, citrate plays important roles in fatty acid and sterol synthesis, regulation of glycolysis, protein acetylation, and other physiopathological processes. This Mus musculus (Mouse) protein is Tricarboxylate transport protein, mitochondrial.